We begin with the raw amino-acid sequence, 235 residues long: Proteasome subunit alpha type-2-B (235 aa).

Lys-64 participates in a covalent cross-link: Glycyl lysine isopeptide (Lys-Gly) (interchain with G-Cter in ubiquitin).

This sequence belongs to the peptidase T1A family. In terms of assembly, component of the 20S core complex of the 26S proteasome. The 26S proteasome is composed of a core protease (CP), known as the 20S proteasome, capped at one or both ends by the 19S regulatory particle (RP/PA700). The 20S proteasome core is composed of 28 subunits that are arranged in four stacked rings, resulting in a barrel-shaped structure. The two end rings are each formed by seven alpha subunits, and the two central rings are each formed by seven beta subunits. The catalytic chamber with the active sites is on the inside of the barrel.

Its subcellular location is the cytoplasm. It is found in the nucleus. The proteasome is a multicatalytic proteinase complex which is characterized by its ability to cleave peptides with Arg, Phe, Tyr, Leu, and Glu adjacent to the leaving group at neutral or slightly basic pH. The proteasome has an ATP-dependent proteolytic activity. This chain is Proteasome subunit alpha type-2-B (PAB2), found in Arabidopsis thaliana (Mouse-ear cress).